A 372-amino-acid polypeptide reads, in one-letter code: L-selectin (372 aa).

Positions 1-28 (MIFPWKCQSTQRDLCNIFKLWGWTMLCC) are cleaved as a signal peptide. Positions 29 to 38 (DFLAHHGTDC) are excised as a propeptide. The Extracellular segment spans residues 39-332 (WTYHYSEKPM…FSMIKEGDYN (294 aa)). Positions 55–155 (RFCRENYTDL…ACHKLKAALC (101 aa)) constitute a C-type lectin domain. Cystine bridges form between Cys57–Cys155, Cys128–Cys147, Cys128–Cys160, Cys160–Cys171, Cys165–Cys180, Cys182–Cys191, Cys197–Cys241, Cys227–Cys254, Cys259–Cys303, and Cys289–Cys316. Residues Asn60 and Asn104 are each glycosylated (N-linked (GlcNAc...) asparagine). Residues Glu118, Asn120, Glu126, Asn143, and Asp144 each coordinate Ca(2+). The 37-residue stretch at 156-192 (YTASCQPWSCSGHGECVEIINNYTCNCDVGYYGPQCQ) folds into the EGF-like domain. Residue Asn177 is glycosylated (N-linked (GlcNAc...) asparagine). Sushi domains are found at residues 195-256 (IQCE…TCQV) and 257-318 (IQCE…ICQK). Residues Asn216, Asn226, Asn232, Asn246, and Asn271 are each glycosylated (N-linked (GlcNAc...) asparagine). Residues 333-355 (PLFIPVAVMVTAFSGLAFIIWLA) traverse the membrane as a helical segment. Topologically, residues 356-372 (RRLKKGKKSKKSMDDPY) are cytoplasmic.

This sequence belongs to the selectin/LECAM family. Interaction with SELPLG/PSGL1 and PODXL2 is required for promoting recruitment and rolling of leukocytes. This interaction is dependent on the sialyl Lewis X glycan modification of SELPLG and PODXL2, and tyrosine sulfation modifications of SELPLG. Sulfation on 'Tyr-51' of SELPLG is important for L-selectin binding. Post-translationally, N-glycosylated.

It is found in the cell membrane. Calcium-dependent lectin that mediates cell adhesion by binding to glycoproteins on neighboring cells. Mediates the adherence of lymphocytes to endothelial cells of high endothelial venules in peripheral lymph nodes. Promotes initial tethering and rolling of leukocytes in endothelia. The chain is L-selectin (SELL) from Pongo pygmaeus (Bornean orangutan).